Consider the following 139-residue polypeptide: D-ribose pyranase (139 aa).

The active-site Proton donor is His-20. Residues Asp-28, His-106, and 128 to 130 contribute to the substrate site; that span reads YAN.

The protein belongs to the RbsD / FucU family. RbsD subfamily. Homodecamer.

It localises to the cytoplasm. The enzyme catalyses beta-D-ribopyranose = beta-D-ribofuranose. It participates in carbohydrate metabolism; D-ribose degradation; D-ribose 5-phosphate from beta-D-ribopyranose: step 1/2. Its function is as follows. Catalyzes the interconversion of beta-pyran and beta-furan forms of D-ribose. This chain is D-ribose pyranase, found in Escherichia coli O139:H28 (strain E24377A / ETEC).